Here is a 298-residue protein sequence, read N- to C-terminus: MLKMEDDQFERFVGLFSMKDEDFPYNSQVTNEIQTFRKQQVDSQLFFDVLLSFIEGIEDPSSLYPPKSIDDLQSLFMIIENSNIDELKQQCFYYYLLKDWEKSETYSEQVSLPKNYQHLMDGYYYLDRLKFEEAINHLLLPDVLPNFPDKIIETLYSNEKYKFLIRFVSFVGPPLDTFRKEECYALSLVRYSFLASYHYMKKCTKPLVLWEEMIQLILESNDTQSCKLIVSLPLSQEECEVLFSLLRSKKEPLYLNTLLALLVESNNIQEALELSSNSTHLQKSAVNTYLHKLNSLSS.

It localises to the cytoplasm. The protein localises to the nucleus. This is an uncharacterized protein from Schizosaccharomyces pombe (strain 972 / ATCC 24843) (Fission yeast).